Here is a 264-residue protein sequence, read N- to C-terminus: Thymidylate synthase (264 aa).

Arg-21 provides a ligand contact to dUMP. His-51 contributes to the (6R)-5,10-methylene-5,6,7,8-tetrahydrofolate binding site. Position 126–127 (126–127 (RR)) interacts with dUMP. Cys-146 serves as the catalytic Nucleophile. DUMP contacts are provided by residues 166–169 (RSCD), Asn-177, and 207–209 (HLY). Asp-169 provides a ligand contact to (6R)-5,10-methylene-5,6,7,8-tetrahydrofolate. Ala-263 lines the (6R)-5,10-methylene-5,6,7,8-tetrahydrofolate pocket.

Belongs to the thymidylate synthase family. Bacterial-type ThyA subfamily. In terms of assembly, homodimer.

The protein resides in the cytoplasm. It catalyses the reaction dUMP + (6R)-5,10-methylene-5,6,7,8-tetrahydrofolate = 7,8-dihydrofolate + dTMP. It functions in the pathway pyrimidine metabolism; dTTP biosynthesis. Its function is as follows. Catalyzes the reductive methylation of 2'-deoxyuridine-5'-monophosphate (dUMP) to 2'-deoxythymidine-5'-monophosphate (dTMP) while utilizing 5,10-methylenetetrahydrofolate (mTHF) as the methyl donor and reductant in the reaction, yielding dihydrofolate (DHF) as a by-product. This enzymatic reaction provides an intracellular de novo source of dTMP, an essential precursor for DNA biosynthesis. The chain is Thymidylate synthase from Pectobacterium atrosepticum (strain SCRI 1043 / ATCC BAA-672) (Erwinia carotovora subsp. atroseptica).